A 377-amino-acid polypeptide reads, in one-letter code: Flap endonuclease 1 (377 aa).

The tract at residues 1-105 (MGIKGLSQVI…GELAKRASRQ (105 aa)) is N-domain. Asp-34 is a binding site for Mg(2+). Residues Arg-47 and Arg-71 each coordinate DNA. Asp-87 contacts Mg(2+). Residues 96–115 (GELAKRASRQQKAREEREEA) form a disordered region. The interval 123–254 (MVDKFAKRTV…ARAVELIRQH (132 aa)) is I-domain. 4 residues coordinate Mg(2+): Glu-159, Glu-161, Asp-180, and Asp-182. Glu-159 contacts DNA. DNA contacts are provided by Gly-232 and Asp-234. Asp-234 contributes to the Mg(2+) binding site. Residues 337 to 345 (PQGRLDSFF) form an interaction with PCNA region. The disordered stretch occupies residues 350-377 (STKKEKEKPKAAAKRKRDTKSSAPKKKR). The segment covering 360–377 (AAAKRKRDTKSSAPKKKR) has biased composition (basic residues).

The protein belongs to the XPG/RAD2 endonuclease family. FEN1 subfamily. In terms of assembly, interacts with PCNA. Three molecules of rad2 bind to one PCNA trimer with each molecule binding to one PCNA monomer. PCNA stimulates the nuclease activity without altering cleavage specificity. Mg(2+) is required as a cofactor. In terms of processing, phosphorylated. Phosphorylation upon DNA damage induces relocalization to the nuclear plasma.

It localises to the nucleus. The protein resides in the nucleolus. It is found in the nucleoplasm. The protein localises to the mitochondrion. In terms of biological role, structure-specific nuclease with 5'-flap endonuclease and 5'-3' exonuclease activities involved in DNA replication and repair. During DNA replication, cleaves the 5'-overhanging flap structure that is generated by displacement synthesis when DNA polymerase encounters the 5'-end of a downstream Okazaki fragment. It enters the flap from the 5'-end and then tracks to cleave the flap base, leaving a nick for ligation. Also involved in the long patch base excision repair (LP-BER) pathway, by cleaving within the apurinic/apyrimidinic (AP) site-terminated flap. Acts as a genome stabilization factor that prevents flaps from equilibrating into structures that lead to duplications and deletions. Also possesses 5'-3' exonuclease activity on nicked or gapped double-stranded DNA, and exhibits RNase H activity. Also involved in replication and repair of rDNA and in repairing mitochondrial DNA. The chain is Flap endonuclease 1 from Schizosaccharomyces japonicus (strain yFS275 / FY16936) (Fission yeast).